The following is a 199-amino-acid chain: Thymidylate kinase (199 aa).

7 to 14 (GIDGSGKT) is a binding site for ATP.

This sequence belongs to the thymidylate kinase family.

The enzyme catalyses dTMP + ATP = dTDP + ADP. Functionally, phosphorylation of dTMP to form dTDP in both de novo and salvage pathways of dTTP synthesis. This chain is Thymidylate kinase, found in Tropheryma whipplei (strain Twist) (Whipple's bacillus).